Consider the following 100-residue polypeptide: Large ribosomal subunit protein uL23 (100 aa).

Belongs to the universal ribosomal protein uL23 family. As to quaternary structure, part of the 50S ribosomal subunit. Contacts protein L29, and trigger factor when it is bound to the ribosome.

One of the early assembly proteins it binds 23S rRNA. One of the proteins that surrounds the polypeptide exit tunnel on the outside of the ribosome. Forms the main docking site for trigger factor binding to the ribosome. The protein is Large ribosomal subunit protein uL23 of Mycobacterium leprae (strain Br4923).